A 163-amino-acid chain; its full sequence is Nucleotide-binding protein Mflv_5248 (163 aa).

Belongs to the YajQ family.

In terms of biological role, nucleotide-binding protein. This Mycolicibacterium gilvum (strain PYR-GCK) (Mycobacterium gilvum (strain PYR-GCK)) protein is Nucleotide-binding protein Mflv_5248.